We begin with the raw amino-acid sequence, 278 residues long: Pantothenate synthetase (278 aa).

Position 30–37 (30–37 (MGFLHEGH)) interacts with ATP. Histidine 37 (proton donor) is an active-site residue. Glutamine 61 lines the (R)-pantoate pocket. Residue glutamine 61 coordinates beta-alanine. An ATP-binding site is contributed by 147–150 (GQKD). Residue glutamine 153 coordinates (R)-pantoate. Residues valine 176 and 184 to 187 (LSSR) each bind ATP.

This sequence belongs to the pantothenate synthetase family. In terms of assembly, homodimer.

It is found in the cytoplasm. It carries out the reaction (R)-pantoate + beta-alanine + ATP = (R)-pantothenate + AMP + diphosphate + H(+). The protein operates within cofactor biosynthesis; (R)-pantothenate biosynthesis; (R)-pantothenate from (R)-pantoate and beta-alanine: step 1/1. In terms of biological role, catalyzes the condensation of pantoate with beta-alanine in an ATP-dependent reaction via a pantoyl-adenylate intermediate. This Thermosipho africanus (strain TCF52B) protein is Pantothenate synthetase.